Consider the following 844-residue polypeptide: DNA mismatch repair protein MutS (844 aa).

Residue 602–609 (GPNMSGKS) participates in ATP binding.

It belongs to the DNA mismatch repair MutS family.

Its function is as follows. This protein is involved in the repair of mismatches in DNA. It is possible that it carries out the mismatch recognition step. This protein has a weak ATPase activity. In Streptococcus pneumoniae serotype 19F (strain G54), this protein is DNA mismatch repair protein MutS.